A 603-amino-acid polypeptide reads, in one-letter code: DNA mismatch repair protein MutL (603 aa).

The protein belongs to the DNA mismatch repair MutL/HexB family.

Functionally, this protein is involved in the repair of mismatches in DNA. It is required for dam-dependent methyl-directed DNA mismatch repair. May act as a 'molecular matchmaker', a protein that promotes the formation of a stable complex between two or more DNA-binding proteins in an ATP-dependent manner without itself being part of a final effector complex. The sequence is that of DNA mismatch repair protein MutL from Sphingopyxis alaskensis (strain DSM 13593 / LMG 18877 / RB2256) (Sphingomonas alaskensis).